Reading from the N-terminus, the 595-residue chain is Aspartate--tRNA(Asp/Asn) ligase (595 aa).

Glu175 contacts L-aspartate. An aspartate region spans residues Gln199–Lys202. Arg221 and His451 together coordinate L-aspartate. Arg221–Glu223 is a binding site for ATP. Residue Glu485 participates in ATP binding. Arg492 contacts L-aspartate. Residue Gly537–Arg540 participates in ATP binding.

Belongs to the class-II aminoacyl-tRNA synthetase family. Type 1 subfamily. In terms of assembly, homodimer.

The protein localises to the cytoplasm. The catalysed reaction is tRNA(Asx) + L-aspartate + ATP = L-aspartyl-tRNA(Asx) + AMP + diphosphate. Functionally, aspartyl-tRNA synthetase with relaxed tRNA specificity since it is able to aspartylate not only its cognate tRNA(Asp) but also tRNA(Asn). Reaction proceeds in two steps: L-aspartate is first activated by ATP to form Asp-AMP and then transferred to the acceptor end of tRNA(Asp/Asn). This is Aspartate--tRNA(Asp/Asn) ligase from Acidiphilium cryptum (strain JF-5).